A 308-amino-acid polypeptide reads, in one-letter code: ATP synthase gamma chain (308 aa).

Belongs to the ATPase gamma chain family. As to quaternary structure, F-type ATPases have 2 components, CF(1) - the catalytic core - and CF(0) - the membrane proton channel. CF(1) has five subunits: alpha(3), beta(3), gamma(1), delta(1), epsilon(1). CF(0) has three main subunits: a, b and c.

The protein localises to the cell membrane. Produces ATP from ADP in the presence of a proton gradient across the membrane. The gamma chain is believed to be important in regulating ATPase activity and the flow of protons through the CF(0) complex. The sequence is that of ATP synthase gamma chain from Lacticaseibacillus paracasei (strain ATCC 334 / BCRC 17002 / CCUG 31169 / CIP 107868 / KCTC 3260 / NRRL B-441) (Lactobacillus paracasei).